Consider the following 158-residue polypeptide: MTETTEKVESIGPLDVKRVMAALPHRFPMLLVDRVETLIPGEKIVAIKAVTINEPFFTGHFPGNPIMPGVLIVEALAQAAGVLAIESLGLTGTGKLVYFMAINETKFRIPVEPGILLRLEVEFLQKRAKICKFKARALIEDKVAAETEFTAMIADPAN.

His-60 is a catalytic residue.

The protein belongs to the thioester dehydratase family. FabZ subfamily.

It is found in the cytoplasm. It carries out the reaction a (3R)-hydroxyacyl-[ACP] = a (2E)-enoyl-[ACP] + H2O. In terms of biological role, involved in unsaturated fatty acids biosynthesis. Catalyzes the dehydration of short chain beta-hydroxyacyl-ACPs and long chain saturated and unsaturated beta-hydroxyacyl-ACPs. The sequence is that of 3-hydroxyacyl-[acyl-carrier-protein] dehydratase FabZ from Zymomonas mobilis subsp. mobilis (strain ATCC 31821 / ZM4 / CP4).